A 362-amino-acid chain; its full sequence is Apelin receptor A (362 aa).

Over 1–34 (MEPTSEYTETYDYYDTGYNDSGCDYSEWEPSYSL) the chain is Extracellular. N19 carries an N-linked (GlcNAc...) asparagine glycan. 2 disulfides stabilise this stretch: C23–C286 and C105–C184. A helical transmembrane segment spans residues 35–55 (IPVLYMLIFILGLSGNGVVIF). The Cytoplasmic segment spans residues 56–73 (TVWRAKSKRRAADVYIGN). Residues 74–94 (LALADLTFVITLPLWAVYTAL) traverse the membrane as a helical segment. At 95-106 (GYHWPFGVALCK) the chain is on the extracellular side. A helical membrane pass occupies residues 107-127 (ISSYVVLVNMYASVFCLTCLS). Over 128 to 149 (FDRYLAIVHSLSSGRLRSRATM) the chain is Cytoplasmic. Residues 150 to 170 (LASLGAIWFLSCLLAVPTLLF) traverse the membrane as a helical segment. The Extracellular portion of the chain corresponds to 171 to 211 (RTTVDDTGSNRTTCAMDFSLVTLNQDHESLWIAGLSLSSSA). N-linked (GlcNAc...) asparagine glycosylation occurs at N180. The helical transmembrane segment at 212-232 (LGFLLPFLAMTVCYCFIGCTV) threads the bilayer. The Cytoplasmic segment spans residues 233–248 (TRHFSHLRKEDQKKRR). Residues 249-269 (LLKIITTLVVVFAFCWTPFHV) form a helical membrane-spanning segment. Residues 270–284 (LKSMDALSYLDLAPN) lie on the Extracellular side of the membrane. A helical transmembrane segment spans residues 285-305 (SCGFLHFLLLAHPYATCLAYV). Over 306–362 (NSCLNPFLYAFFDLRFRSQCLCLLNLKKAMHGHMSSMSSTLSAQTQKSEVQSLATKV) the chain is Cytoplasmic.

This sequence belongs to the G-protein coupled receptor 1 family. First expressed before epiboly in dorsal precursors. During epiboly, expressed in the enveloping layer, yolk syncytial layer and migrating mesendoderm. During segmentation stages, expressed in epithelial structures such as adaxial cells, border cells of the newly formed somites, developing lens, otic vesicles and venous vasculature.

It localises to the cell membrane. G protein-coupled receptor for peptide hormones apelin (apln) and apelin receptor early endogenous ligand (apela), that plays a role in the regulation of normal cardiovascular function and fluid homeostasis. When acting as apelin receptor, activates both G(i) protein pathway that inhibits adenylate cyclase activity, and the beta-arrestin pathway that promotes internalization of the receptor. Also functions as mechanoreceptor that is activated by pathological stimuli in a G-protein-independent fashion to induce beta-arrestin signaling, hence eliciting cardiac hypertrophy. However, the presence of apelin ligand blunts cardiac hypertrophic induction from APLNR/APJ on response to pathological stimuli. Plays a key role in early development such as gastrulation, blood vessels formation and heart morphogenesis by acting as a receptor for apela hormone, promoting endoderm and mesendoderm cell migration and regulating the migration of cells fated to become myocardial progenitors, respectively. Positively regulates angioblast migration toward the embryonic midline, i.e. the position of the future vessel formation, during vasculogenesis. May promote sinus venosus (SV)-derived endothelial cells migration into the developing heart to promote coronary blood vessel development. Required for cardiovascular development, particularly for intersomitic vein angiogenesis by acting as a receptor for apln hormone. Also plays a role in various processes in adults such as regulation of blood vessel formation, blood pressure, heart contractility, and heart failure. Acts redundantly with agtrl1b in heart development. The chain is Apelin receptor A (aplnra) from Danio rerio (Zebrafish).